Here is a 428-residue protein sequence, read N- to C-terminus: Elongation factor 1-alpha (428 aa).

In terms of domain architecture, tr-type G spans K5–I217. The G1 stretch occupies residues G14–S21. G14 to S21 contributes to the GTP binding site. S21 contacts Mg(2+). Residues G68–D72 are G2. The tract at residues D89–G92 is G3. Residues D89–H93 and N144–D147 contribute to the GTP site. The interval N144–D147 is G4. The interval S181–W183 is G5.

It belongs to the TRAFAC class translation factor GTPase superfamily. Classic translation factor GTPase family. EF-Tu/EF-1A subfamily.

The protein resides in the cytoplasm. The catalysed reaction is GTP + H2O = GDP + phosphate + H(+). Functionally, GTP hydrolase that promotes the GTP-dependent binding of aminoacyl-tRNA to the A-site of ribosomes during protein biosynthesis. This is Elongation factor 1-alpha from Pyrococcus horikoshii (strain ATCC 700860 / DSM 12428 / JCM 9974 / NBRC 100139 / OT-3).